The chain runs to 250 residues: MFIFKRKKQVEMPLEKIPAHIGIIMDGNGRWAKKRLKPRVMGHKAGMDALQEVTIAASGLGVKVLTVYAFSTENWSRPDDEVKFIMNLPVKFFDKYVPELDKNNVRVQVIGDTHKLPKATYDAMQRACLRTKHNSGLVLNFALNYGGRSEITNAIKEIAQDVLEAKLNPDDITEDLVANHLMTNSLPYLYRDPDLIIRTSGELRLSNFLPWQSAYSEFYFTPVLWPDFKKDELHKAIVDYNQRHRRFGSV.

D26 is an active-site residue. D26 serves as a coordination point for Mg(2+). Substrate contacts are provided by residues 27-30, W31, R39, H43, and 71-73; these read GNGR and STE. The active-site Proton acceptor is N74. Substrate contacts are provided by residues W75, R77, R198, and 204 to 206; that span reads RLS. E217 serves as a coordination point for Mg(2+).

The protein belongs to the UPP synthase family. In terms of assembly, homodimer. The cofactor is Mg(2+).

Its function is as follows. Catalyzes the condensation of isopentenyl diphosphate (IPP) with allylic pyrophosphates generating different type of terpenoids. This chain is Isoprenyl transferase, found in Streptococcus agalactiae serotype V (strain ATCC BAA-611 / 2603 V/R).